A 269-amino-acid chain; its full sequence is Formamidopyrimidine-DNA glycosylase (269 aa).

Pro2 (schiff-base intermediate with DNA) is an active-site residue. The Proton donor role is filled by Glu3. Lys57 (proton donor; for beta-elimination activity) is an active-site residue. Positions 90, 109, and 150 each coordinate DNA. Residues 235-269 form an FPG-type zinc finger; that stretch reads QVYGRKGEPCRVCGTPIVATKHAQRATFYCRHCQK. Arg259 acts as the Proton donor; for delta-elimination activity in catalysis.

This sequence belongs to the FPG family. Monomer. Requires Zn(2+) as cofactor.

It carries out the reaction Hydrolysis of DNA containing ring-opened 7-methylguanine residues, releasing 2,6-diamino-4-hydroxy-5-(N-methyl)formamidopyrimidine.. The enzyme catalyses 2'-deoxyribonucleotide-(2'-deoxyribose 5'-phosphate)-2'-deoxyribonucleotide-DNA = a 3'-end 2'-deoxyribonucleotide-(2,3-dehydro-2,3-deoxyribose 5'-phosphate)-DNA + a 5'-end 5'-phospho-2'-deoxyribonucleoside-DNA + H(+). Functionally, involved in base excision repair of DNA damaged by oxidation or by mutagenic agents. Acts as a DNA glycosylase that recognizes and removes damaged bases. Has a preference for oxidized purines, such as 7,8-dihydro-8-oxoguanine (8-oxoG). Has AP (apurinic/apyrimidinic) lyase activity and introduces nicks in the DNA strand. Cleaves the DNA backbone by beta-delta elimination to generate a single-strand break at the site of the removed base with both 3'- and 5'-phosphates. The chain is Formamidopyrimidine-DNA glycosylase from Salmonella enteritidis PT4 (strain P125109).